The chain runs to 273 residues: MSIEEENVPTTVDSGAADTTVKSPEKKPAAKGGKSKKTTTAKATKKPVKAAAPTKKKTTSSHPTYEEMIKDAIVTLKERTGSSQYAIQKFIEEKHKSLPPTFRKLLLVNLKRLVASEKLVKVKASFKIPSARSAATPKPAAPVKKKATVVAKPKGKVAAAVAPAKAKAAAKGTKKPAAKVVAKAKVTAKPKAKVTAAKPKSKSVAAVSKTKAVAAKPKAKERPAKASRTSTRTSPGKKVAAPAKKVAVTKKAPAKSVKVKSPAKRASTRKAKK.

Residues 1–63 (MSIEEENVPT…TKKKTTSSHP (63 aa)) are disordered. Ser-2 bears the N-acetylserine mark. Ser-14 is subject to Phosphoserine. A compositionally biased stretch (basic residues) spans 33–59 (GKSKKTTTAKATKKPVKAAAPTKKKTT). The 70-residue stretch at 61–130 (SHPTYEEMIK…KVKASFKIPS (70 aa)) folds into the H15 domain. Glycyl lysine isopeptide (Lys-Gly) (interchain with G-Cter in ubiquitin) cross-links involve residues Lys-156 and Lys-165. Composition is skewed to low complexity over residues 193–216 (KVTA…VAAK) and 237–256 (KKVA…PAKS). A disordered region spans residues 193-273 (KVTAAKPKSK…KRASTRKAKK (81 aa)). The span at 257–273 (VKVKSPAKRASTRKAKK) shows a compositional bias: basic residues.

This sequence belongs to the histone H1/H5 family.

It localises to the nucleus. It is found in the chromosome. In terms of biological role, histones H1 are necessary for the condensation of nucleosome chains into higher-order structures. The chain is Histone H1.2 from Arabidopsis thaliana (Mouse-ear cress).